Consider the following 153-residue polypeptide: Ribosome maturation factor RimP (153 aa).

This sequence belongs to the RimP family.

It is found in the cytoplasm. In terms of biological role, required for maturation of 30S ribosomal subunits. In Trichormus variabilis (strain ATCC 29413 / PCC 7937) (Anabaena variabilis), this protein is Ribosome maturation factor RimP.